The sequence spans 352 residues: MAPTAVYTQKDSPSSSQPSSKGPALAIGSLETAQDGKYQSLITELEATRQVDKLLLDRLVDGATTLEPSKYNSVHVTLASSDYQSLQESTLRSLLTQLLTGLTPLGTLHLLNLTDGLKTLPSELTLSGFLVLSAAGENPGDSIVAQKPAHAIGASVSLKKRGSATTTSTTAFVTTTTTTSTSTTTATVTSAPSVPLLLRKRGDPAKKKALWALTTDASASPSTKIDADALLTAEDKARPVPTCAPVDRSAPRRKKACKNCSCGLAELEEEEKRNAPVVVIDSSIDGEGGAKAVDKAERERLLEAAKNAPKATSSCGSCFLGDAFRCAGCPYLGLPAFKPGEKVEIDFGMDDF.

The segment covering methionine 1 to aspartate 11 has biased composition (polar residues). Residues methionine 1 to alanine 24 form a disordered region. The interval methionine 1–leucine 196 is N-terminal SAM-like domain. Residues leucine 196–alanine 237 form a linker region. The [2Fe-2S] cluster site is built by cysteine 243, cysteine 257, cysteine 260, and cysteine 262. The tract at residues cysteine 243 to cysteine 262 is fe-S binding site A. Positions 315, 318, 326, and 329 each coordinate [4Fe-4S] cluster. 2 consecutive short sequence motifs (cx2C motif) follow at residues cysteine 315–cysteine 318 and cysteine 326–cysteine 329. Residues cysteine 315–cysteine 329 form a fe-S binding site B region.

This sequence belongs to the anamorsin family. Monomer. Interacts with TAH18. Interacts with MIA40. [2Fe-2S] cluster is required as a cofactor. Requires [4Fe-4S] cluster as cofactor.

The protein localises to the cytoplasm. It is found in the mitochondrion intermembrane space. Component of the cytosolic iron-sulfur (Fe-S) protein assembly (CIA) machinery required for the maturation of extramitochondrial Fe-S proteins. Part of an electron transfer chain functioning in an early step of cytosolic Fe-S biogenesis, facilitating the de novo assembly of a [4Fe-4S] cluster on the scaffold complex CFD1-NBP35. Electrons are transferred to DRE2 from NADPH via the FAD- and FMN-containing protein TAH18. TAH18-DRE2 are also required for the assembly of the diferric tyrosyl radical cofactor of ribonucleotide reductase (RNR), probably by providing electrons for reduction during radical cofactor maturation in the catalytic small subunit RNR2. In Coprinopsis cinerea (strain Okayama-7 / 130 / ATCC MYA-4618 / FGSC 9003) (Inky cap fungus), this protein is Fe-S cluster assembly protein DRE2.